The primary structure comprises 207 residues: Urease accessory protein UreG (207 aa).

16–23 (GPVGSGKT) is a GTP binding site.

This sequence belongs to the SIMIBI class G3E GTPase family. UreG subfamily. In terms of assembly, homodimer. UreD, UreF and UreG form a complex that acts as a GTP-hydrolysis-dependent molecular chaperone, activating the urease apoprotein by helping to assemble the nickel containing metallocenter of UreC. The UreE protein probably delivers the nickel.

Its subcellular location is the cytoplasm. Its function is as follows. Facilitates the functional incorporation of the urease nickel metallocenter. This process requires GTP hydrolysis, probably effectuated by UreG. The polypeptide is Urease accessory protein UreG (Shewanella halifaxensis (strain HAW-EB4)).